A 112-amino-acid polypeptide reads, in one-letter code: Protein FAM32A (112 aa).

Residues 23 to 56 (TKRKKKKKDKDKAKMLEAMGTSKKSEEEKRRCLD) form a disordered region. Residues 45–56 (KKSEEEKRRCLD) show a composition bias toward basic and acidic residues.

The protein belongs to the FAM32 family. In terms of tissue distribution, widely expressed, with highest level in pancreas and lowest in muscle.

It localises to the nucleus. May induce G2 arrest and apoptosis. May also increase cell sensitivity to apoptotic stimuli. In cell lines, may play a role in the inhibition of anchor-independent cell growth. This is Protein FAM32A (Fam32a) from Mus musculus (Mouse).